The primary structure comprises 387 residues: Acetylornithine deacetylase (387 aa).

Zn(2+) is bound at residue His-80. The active site involves Asp-82. Residue Asp-112 participates in Zn(2+) binding. Residue Glu-144 is part of the active site. Residues Glu-145, Glu-169, and His-355 each contribute to the Zn(2+) site.

This sequence belongs to the peptidase M20A family. ArgE subfamily. Homodimer. Zn(2+) is required as a cofactor. It depends on Co(2+) as a cofactor. Glutathione serves as cofactor.

The protein localises to the cytoplasm. It carries out the reaction N(2)-acetyl-L-ornithine + H2O = L-ornithine + acetate. The protein operates within amino-acid biosynthesis; L-arginine biosynthesis; L-ornithine from N(2)-acetyl-L-ornithine (linear): step 1/1. Functionally, catalyzes the hydrolysis of the amide bond of N(2)-acetylated L-amino acids. Cleaves the acetyl group from N-acetyl-L-ornithine to form L-ornithine, an intermediate in L-arginine biosynthesis pathway, and a branchpoint in the synthesis of polyamines. The chain is Acetylornithine deacetylase from Proteus mirabilis (strain HI4320).